The chain runs to 315 residues: L-lactate dehydrogenase (315 aa).

3 residues coordinate NAD(+): Val-14, Asp-35, and Tyr-66. Substrate is bound by residues Gln-83, Arg-89, and 121–124 (NPVD). NAD(+) contacts are provided by residues 119–121 (VAN) and Ser-144. 149–152 (DTAR) provides a ligand contact to substrate. His-176 serves as the catalytic Proton acceptor. Tyr-221 is modified (phosphotyrosine). Thr-230 lines the substrate pocket.

This sequence belongs to the LDH/MDH superfamily. LDH family. Homotetramer.

It is found in the cytoplasm. It catalyses the reaction (S)-lactate + NAD(+) = pyruvate + NADH + H(+). Its pathway is fermentation; pyruvate fermentation to lactate; (S)-lactate from pyruvate: step 1/1. Functionally, catalyzes the conversion of lactate to pyruvate. The protein is L-lactate dehydrogenase of Mesomycoplasma hyopneumoniae (strain 232) (Mycoplasma hyopneumoniae).